The sequence spans 277 residues: 4-hydroxy-tetrahydrodipicolinate reductase (277 aa).

Position 9–14 (9–14 (GATGRM)) interacts with NAD(+). Lysine 37 provides a ligand contact to NADP(+). 75 to 77 (GTS) is an NAD(+) binding site. Histidine 132 acts as the Proton donor/acceptor in catalysis. The active-site Proton donor is lysine 136. Position 142-143 (142-143 (GT)) interacts with (S)-2,3,4,5-tetrahydrodipicolinate. Residues 245-277 (SRERATQTAPTGAASGPVDDGGPSGQAATVTSA) form a disordered region.

Belongs to the DapB family.

The protein localises to the cytoplasm. It catalyses the reaction (S)-2,3,4,5-tetrahydrodipicolinate + NAD(+) + H2O = (2S,4S)-4-hydroxy-2,3,4,5-tetrahydrodipicolinate + NADH + H(+). The catalysed reaction is (S)-2,3,4,5-tetrahydrodipicolinate + NADP(+) + H2O = (2S,4S)-4-hydroxy-2,3,4,5-tetrahydrodipicolinate + NADPH + H(+). Its pathway is amino-acid biosynthesis; L-lysine biosynthesis via DAP pathway; (S)-tetrahydrodipicolinate from L-aspartate: step 4/4. Its function is as follows. Catalyzes the conversion of 4-hydroxy-tetrahydrodipicolinate (HTPA) to tetrahydrodipicolinate. The sequence is that of 4-hydroxy-tetrahydrodipicolinate reductase from Clavibacter sepedonicus (Clavibacter michiganensis subsp. sepedonicus).